Consider the following 171-residue polypeptide: Adenine phosphoribosyltransferase (171 aa).

Belongs to the purine/pyrimidine phosphoribosyltransferase family. As to quaternary structure, homodimer.

The protein localises to the cytoplasm. The enzyme catalyses AMP + diphosphate = 5-phospho-alpha-D-ribose 1-diphosphate + adenine. It functions in the pathway purine metabolism; AMP biosynthesis via salvage pathway; AMP from adenine: step 1/1. In terms of biological role, catalyzes a salvage reaction resulting in the formation of AMP, that is energically less costly than de novo synthesis. In Mycoplasmopsis fermentans (strain ATCC 19989 / NBRC 14854 / NCTC 10117 / PG18) (Mycoplasma fermentans), this protein is Adenine phosphoribosyltransferase.